The following is a 354-amino-acid chain: Uroporphyrinogen decarboxylase (354 aa).

Substrate-binding positions include 27–31, D77, Y154, T209, and H327; that span reads RQAGR.

Belongs to the uroporphyrinogen decarboxylase family. Homodimer.

It is found in the cytoplasm. It carries out the reaction uroporphyrinogen III + 4 H(+) = coproporphyrinogen III + 4 CO2. It functions in the pathway porphyrin-containing compound metabolism; protoporphyrin-IX biosynthesis; coproporphyrinogen-III from 5-aminolevulinate: step 4/4. In terms of biological role, catalyzes the decarboxylation of four acetate groups of uroporphyrinogen-III to yield coproporphyrinogen-III. This is Uroporphyrinogen decarboxylase from Salmonella schwarzengrund (strain CVM19633).